A 281-amino-acid polypeptide reads, in one-letter code: MRSVQNSPIGVFDSGVGGLTVLRELYRQLPQESMLYFADTARLPYGNRSGAEILQYVREILVWMSQQNVKMVIMACNTSSALALDIVRSEFNFPILGVILPGARAAVKQGQRIGVISTPATAKSNAYRQAIQEINPKAQVWQVGCAEFVPLIEANRIHDPYTKQVAWKYLAPLLAQNIDTLVYGCTHYRHLSPIFQEIIPPTVNLIDPANFVVAAAKKELELMGLRHNEPPLPTRFAVSGCPQTFSQISQQWLGYYPLTEQVSLPMTINPSLVREELEILE.

Substrate is bound by residues 13-14 (DS) and 45-46 (YG). Residue C76 is the Proton donor/acceptor of the active site. 77–78 (NT) contributes to the substrate binding site. Catalysis depends on C185, which acts as the Proton donor/acceptor. Residue 186–187 (TH) participates in substrate binding.

Belongs to the aspartate/glutamate racemases family.

It carries out the reaction L-glutamate = D-glutamate. The protein operates within cell wall biogenesis; peptidoglycan biosynthesis. Provides the (R)-glutamate required for cell wall biosynthesis. This is Glutamate racemase from Rippkaea orientalis (strain PCC 8801 / RF-1) (Cyanothece sp. (strain PCC 8801)).